The following is a 308-amino-acid chain: GTPase Era (308 aa).

The Era-type G domain occupies 7-181 (RCGWVALIGP…LRLIVGYMPE (175 aa)). A G1 region spans residues 15–22 (GPPNAGKS). 15-22 (GPPNAGKS) provides a ligand contact to GTP. The G2 stretch occupies residues 41–45 (QTTRN). The G3 stretch occupies residues 62-65 (DTPG). GTP is bound by residues 62–66 (DTPGI) and 130–133 (NKID). The G4 stretch occupies residues 130–133 (NKID). The interval 160 to 162 (ASA) is G5. The 79-residue stretch at 212-290 (LRQELPYSTA…HLELWVKVRE (79 aa)) folds into the KH type-2 domain.

Belongs to the TRAFAC class TrmE-Era-EngA-EngB-Septin-like GTPase superfamily. Era GTPase family. As to quaternary structure, monomer.

The protein resides in the cytoplasm. The protein localises to the cell inner membrane. Its function is as follows. An essential GTPase that binds both GDP and GTP, with rapid nucleotide exchange. Plays a role in 16S rRNA processing and 30S ribosomal subunit biogenesis and possibly also in cell cycle regulation and energy metabolism. This is GTPase Era from Nitratidesulfovibrio vulgaris (strain DP4) (Desulfovibrio vulgaris).